An 80-amino-acid chain; its full sequence is Exodeoxyribonuclease 7 small subunit (80 aa).

It belongs to the XseB family. Heterooligomer composed of large and small subunits.

The protein localises to the cytoplasm. The enzyme catalyses Exonucleolytic cleavage in either 5'- to 3'- or 3'- to 5'-direction to yield nucleoside 5'-phosphates.. In terms of biological role, bidirectionally degrades single-stranded DNA into large acid-insoluble oligonucleotides, which are then degraded further into small acid-soluble oligonucleotides. The protein is Exodeoxyribonuclease 7 small subunit of Escherichia coli O6:K15:H31 (strain 536 / UPEC).